Here is a 350-residue protein sequence, read N- to C-terminus: Serpentine receptor class beta-12 (350 aa).

Topologically, residues 1 to 21 (MSEANLTECELAYQLTYHPFY) are extracellular. N-linked (GlcNAc...) asparagine glycosylation is present at N5. The chain crosses the membrane as a helical span at residues 22 to 42 (MIAQFWSFFVSLLAMPSLIFF). Topologically, residues 43 to 57 (MVEKVFKLPFHGNLK) are cytoplasmic. A helical transmembrane segment spans residues 58–78 (FLLVSYFIGTFLFASIICFTF). Over 79–103 (GYHFFVPFFVTSNCDLIINATLFKY) the chain is Extracellular. A glycan (N-linked (GlcNAc...) asparagine) is linked at N97. A helical transmembrane segment spans residues 104–124 (GHMIALIFMTIPMILPTAFTV). Topologically, residues 125-141 (ERFVALKMAHSYEHVRT) are cytoplasmic. A helical membrane pass occupies residues 142-162 (LLGPVLVLVVIAIDSMFLYDI). Residues 163 to 189 (YGQEKFDKPFINFILVPATSALQFNSF) are Extracellular-facing. The chain crosses the membrane as a helical span at residues 190–210 (LWYMLYLKITNFICNLILLFI). Topologically, residues 211–243 (HKILHQSSRYRRKNVSLSVKYEMQEISQSSRFT) are cytoplasmic. A helical transmembrane segment spans residues 244–264 (LIVTFTHLLFFGWYVSTILLI). The Extracellular portion of the chain corresponds to 265–282 (RTVGPDFFRGFINYTVMR). A glycan (N-linked (GlcNAc...) asparagine) is linked at N277. Residues 283 to 303 (GVYCATPTYNLVIVFIGFKAL) traverse the membrane as a helical segment. The Cytoplasmic segment spans residues 304–350 (NHLNFKRNNKVQSTIQIKSTGQEGAENYDNAISNYWDSVYTMNKSKL).

This sequence belongs to the nematode receptor-like protein srb family. In terms of tissue distribution, expressed throughout the head.

The protein localises to the cell membrane. It localises to the perikaryon. The protein resides in the cell projection. Its subcellular location is the dendrite. Functionally, G-protein coupled receptor. Plays a role in the navigational capacity of sperm and promotes the targeting of sperm derived from males to the fertilization site in the uterus of hermaphrodites. This chain is Serpentine receptor class beta-12, found in Caenorhabditis elegans.